The following is a 143-amino-acid chain: Nucleoside diphosphate kinase (143 aa).

Residues Lys11, Phe59, Arg87, Thr93, Arg104, and Asn114 each contribute to the ATP site. His117 serves as the catalytic Pros-phosphohistidine intermediate.

The protein belongs to the NDK family. In terms of assembly, homotetramer. Mg(2+) serves as cofactor.

It is found in the cytoplasm. The catalysed reaction is a 2'-deoxyribonucleoside 5'-diphosphate + ATP = a 2'-deoxyribonucleoside 5'-triphosphate + ADP. The enzyme catalyses a ribonucleoside 5'-diphosphate + ATP = a ribonucleoside 5'-triphosphate + ADP. In terms of biological role, major role in the synthesis of nucleoside triphosphates other than ATP. The ATP gamma phosphate is transferred to the NDP beta phosphate via a ping-pong mechanism, using a phosphorylated active-site intermediate. This chain is Nucleoside diphosphate kinase, found in Shewanella loihica (strain ATCC BAA-1088 / PV-4).